Here is a 124-residue protein sequence, read N- to C-terminus: Small ribosomal subunit protein uS12 (124 aa).

Asp-89 is subject to 3-methylthioaspartic acid. Residues 102 to 124 (LDTSGVNNRKHGRSKYGTKRPKS) form a disordered region. The span at 109–124 (NRKHGRSKYGTKRPKS) shows a compositional bias: basic residues.

Belongs to the universal ribosomal protein uS12 family. Part of the 30S ribosomal subunit. Contacts proteins S8 and S17. May interact with IF1 in the 30S initiation complex.

Functionally, with S4 and S5 plays an important role in translational accuracy. Its function is as follows. Interacts with and stabilizes bases of the 16S rRNA that are involved in tRNA selection in the A site and with the mRNA backbone. Located at the interface of the 30S and 50S subunits, it traverses the body of the 30S subunit contacting proteins on the other side and probably holding the rRNA structure together. The combined cluster of proteins S8, S12 and S17 appears to hold together the shoulder and platform of the 30S subunit. The chain is Small ribosomal subunit protein uS12 from Francisella tularensis subsp. tularensis (strain FSC 198).